The chain runs to 333 residues: L-lactate dehydrogenase B chain (333 aa).

NAD(+) contacts are provided by residues 29 to 57 (GQVG…LEDK) and Arg-99. Residues Arg-106, Asn-138, and Arg-169 each coordinate substrate. Asn-138 contributes to the NAD(+) binding site. His-193 functions as the Proton acceptor in the catalytic mechanism. Thr-248 serves as a coordination point for substrate.

This sequence belongs to the LDH/MDH superfamily. LDH family. As to quaternary structure, homotetramer.

The protein resides in the cytoplasm. It carries out the reaction (S)-lactate + NAD(+) = pyruvate + NADH + H(+). It functions in the pathway fermentation; pyruvate fermentation to lactate; (S)-lactate from pyruvate: step 1/1. Interconverts simultaneously and stereospecifically pyruvate and lactate with concomitant interconversion of NADH and NAD(+). The sequence is that of L-lactate dehydrogenase B chain (LDHB) from Gallus gallus (Chicken).